Reading from the N-terminus, the 554-residue chain is Folate synthesis bifunctional protein, mitochondrial (554 aa).

The transit peptide at 1-42 (MAPLLSQTLIHTGRFLLRRFLEPPPAVISAVAASRVCFHRYY) directs the protein to the mitochondrion. Residues 90–215 (VIALGSNIGN…SFVLAPLVDL (126 aa)) are HPPK. Residues 273–541 (THVMGILNLT…NVRHNADAAK (269 aa)) form the Pterin-binding domain. Residues 275–554 (VMGILNLTPD…AMLRRRRSKG (280 aa)) are DHPS. A Mg(2+)-binding site is contributed by Asn-280. (7,8-dihydropterin-6-yl)methyl diphosphate contacts are provided by residues Thr-320, Asp-357, Asn-376, Asp-449, Lys-494, and 529–531 (RVH).

The protein in the N-terminal section; belongs to the HPPK family. In the C-terminal section; belongs to the DHPS family. Mg(2+) serves as cofactor. As to expression, ubiquitous.

It localises to the mitochondrion. The enzyme catalyses 6-hydroxymethyl-7,8-dihydropterin + ATP = (7,8-dihydropterin-6-yl)methyl diphosphate + AMP + H(+). It catalyses the reaction (7,8-dihydropterin-6-yl)methyl diphosphate + 4-aminobenzoate = 7,8-dihydropteroate + diphosphate. Its pathway is cofactor biosynthesis; tetrahydrofolate biosynthesis; 2-amino-4-hydroxy-6-hydroxymethyl-7,8-dihydropteridine diphosphate from 7,8-dihydroneopterin triphosphate: step 4/4. It participates in cofactor biosynthesis; tetrahydrofolate biosynthesis; 7,8-dihydrofolate from 2-amino-4-hydroxy-6-hydroxymethyl-7,8-dihydropteridine diphosphate and 4-aminobenzoate: step 1/2. Functionally, catalyzes the first two consecutive steps of tetrahydrofolate biosynthesis. The chain is Folate synthesis bifunctional protein, mitochondrial from Arabidopsis thaliana (Mouse-ear cress).